The primary structure comprises 264 residues: Nuclear egress protein 1 (264 aa).

Over residues 1–12 (MTVHKSRIRRSR) the composition is skewed to basic residues. The disordered stretch occupies residues 1–22 (MTVHKSRIRRSRSLSVTHRIQK). Residues 83–187 (CLEFSPYANE…HIVFQSRTLH (105 aa)) form a CCCH-type zinc finger.

Belongs to the herpesviridae NEC1 protein family. As to quaternary structure, forms a heterohexameric complex with NEC2. Interacts with capsid vertex specific component 2/CVC2; this interaction directs the capsid to the host inner nuclear membrane to initiate budding. Post-translationally, phosphorylated at serine residues in the N-terminus. This phosphorylation regulates the localization within the inner nuclear membrane.

It localises to the host nucleus inner membrane. Functionally, plays an essential role in virion nuclear egress, the first step of virion release from infected cell. Within the host nucleus, NEC1 interacts with the newly formed capsid through the vertexes and directs it to the inner nuclear membrane by associating with NEC2. Induces the budding of the capsid at the inner nuclear membrane as well as its envelopment into the perinuclear space. There, the NEC1/NEC2 complex promotes the fusion of the enveloped capsid with the outer nuclear membrane and the subsequent release of the viral capsid into the cytoplasm where it will reach the secondary budding sites in the host Golgi or trans-Golgi network. The sequence is that of Nuclear egress protein 1 from Human herpesvirus 6A (strain Uganda-1102) (HHV-6 variant A).